Consider the following 348-residue polypeptide: Dihydroorotase (348 aa).

The Zn(2+) site is built by histidine 14 and histidine 16. Substrate contacts are provided by residues 16–18 (HLR) and asparagine 42. Zn(2+) is bound by residues lysine 100, histidine 137, and histidine 175. The residue at position 100 (lysine 100) is an N6-carboxylysine. Histidine 137 serves as a coordination point for substrate. Residue leucine 220 participates in substrate binding. Aspartate 248 is a Zn(2+) binding site. Aspartate 248 is a catalytic residue. The substrate site is built by histidine 252 and alanine 264.

The protein belongs to the metallo-dependent hydrolases superfamily. DHOase family. Class II DHOase subfamily. In terms of assembly, homodimer. It depends on Zn(2+) as a cofactor.

It carries out the reaction (S)-dihydroorotate + H2O = N-carbamoyl-L-aspartate + H(+). Its pathway is pyrimidine metabolism; UMP biosynthesis via de novo pathway; (S)-dihydroorotate from bicarbonate: step 3/3. Functionally, catalyzes the reversible cyclization of carbamoyl aspartate to dihydroorotate. This Pseudomonas paraeruginosa (strain DSM 24068 / PA7) (Pseudomonas aeruginosa (strain PA7)) protein is Dihydroorotase.